We begin with the raw amino-acid sequence, 62 residues long: Potassium channel toxin gamma-KTx 1.1 (62 aa).

The signal sequence occupies residues 1 to 20 (MKVLILIMIIASLMIMGVEM). Cystine bridges form between cysteine 25/cysteine 43, cysteine 31/cysteine 54, cysteine 40/cysteine 59, and cysteine 44/cysteine 61.

This sequence belongs to the ergtoxin family. Gamma-KTx 1 subfamily. After protein storage at -20 Celsius degrees during a couple of months, the Met-55 of a small number of toxins is naturally oxidized. This oxidized form is about three orders of magnitude less efficient (IC(50)=15 uM) than non-oxidized form. As to expression, expressed by the venom gland.

It localises to the secreted. Blocks human and rat Kv11.1/KCNH2/ERG1 and Kv11.3/KCNH7/ERG3, as well as rat (but not human) Kv11.2/KCNH6/ERG2 by binding to channel outer vestibule (S5P domain) with a 1:1 stoichiometry. Inhibition data are the following: hERG1 (reversible, IC(50)~7 nM), rERG1 (reversible, Kd=6.8 nM), rERG2 (irreversible, Kd=2.8 nM), hERG3 (irreversible, Kd=4.05 nM) and rERG3 (reversible, Kd=38.1 nM) potassium channels. The toxin potency is not affected by elevating potassium ion concentration from 2 to 98 mM. This toxin only blocks channels in a closed state. At high toxin concentrations, block of Kv11.1/KCNH2/ERG1 macroscopic current is incomplete (93.5%). This suggests a kinetic mechanism model with two different states of toxin-channel binding (T+C=TC*=TC; in the TC* state, the toxin binds the channel but does not occlude the pore, whereas in the TC state the toxin binds and occludes the pore). In this model, incomplete block is explained by the relatively fast dissociation rate from the blocked channel conformation (TC) relative to the rate of conversion of the toxin-channel encounter complex (TC*) to the blocked channel conformation (TC). This is Potassium channel toxin gamma-KTx 1.1 from Centruroides noxius (Mexican scorpion).